We begin with the raw amino-acid sequence, 233 residues long: MSSDIQQIRIGLTNNHPCSYLADRMERVAVAIDPQMQTPETYEVLMANGFRRSGDTIYKPHCDHCQSCQALRIPAPDFVPSKSQKRLLKLLSQEFHWQLKPELDEDWYALYARYIFARHRHGSMYPPNKMEFAKFARAKWLNTQYLHLYQGEKLVAIAVTDLLPNSASAFYTFYDPDISISLGTLAVLCQLNYCQQTKKQWLYLGYQIDECPAMNYKVRFNPHQRLVNQRWRG.

It belongs to the R-transferase family. Bpt subfamily.

The protein resides in the cytoplasm. It catalyses the reaction N-terminal L-glutamyl-[protein] + L-leucyl-tRNA(Leu) = N-terminal L-leucyl-L-glutamyl-[protein] + tRNA(Leu) + H(+). The enzyme catalyses N-terminal L-aspartyl-[protein] + L-leucyl-tRNA(Leu) = N-terminal L-leucyl-L-aspartyl-[protein] + tRNA(Leu) + H(+). Its function is as follows. Functions in the N-end rule pathway of protein degradation where it conjugates Leu from its aminoacyl-tRNA to the N-termini of proteins containing an N-terminal aspartate or glutamate. The protein is Aspartate/glutamate leucyltransferase of Vibrio cholerae serotype O1 (strain ATCC 39541 / Classical Ogawa 395 / O395).